The primary structure comprises 1073 residues: Carbamoyl phosphate synthase large chain (1073 aa).

Residues M1–E403 form a carboxyphosphate synthetic domain region. Residues R129, R169, G175, G176, E208, L210, E215, G241, V242, H243, Q285, and E299 each contribute to the ATP site. The ATP-grasp 1 domain occupies D133–V328. 3 residues coordinate Mg(2+): Q285, E299, and N301. Q285, E299, and N301 together coordinate Mn(2+). Residues V404–A553 form an oligomerization domain region. The tract at residues N554–S935 is carbamoyl phosphate synthetic domain. The ATP-grasp 2 domain occupies Q678–A869. ATP is bound by residues R714, H753, L755, E760, G785, V786, H787, S788, Q828, and E840. Mg(2+)-binding residues include Q828, E840, and N842. The Mn(2+) site is built by Q828, E840, and N842. The MGS-like domain occupies E936–A1073. Residues E936–A1073 are allosteric domain.

This sequence belongs to the CarB family. As to quaternary structure, composed of two chains; the small (or glutamine) chain promotes the hydrolysis of glutamine to ammonia, which is used by the large (or ammonia) chain to synthesize carbamoyl phosphate. Tetramer of heterodimers (alpha,beta)4. Mg(2+) serves as cofactor. It depends on Mn(2+) as a cofactor.

It catalyses the reaction hydrogencarbonate + L-glutamine + 2 ATP + H2O = carbamoyl phosphate + L-glutamate + 2 ADP + phosphate + 2 H(+). The catalysed reaction is hydrogencarbonate + NH4(+) + 2 ATP = carbamoyl phosphate + 2 ADP + phosphate + 2 H(+). Its pathway is amino-acid biosynthesis; L-arginine biosynthesis; carbamoyl phosphate from bicarbonate: step 1/1. It participates in pyrimidine metabolism; UMP biosynthesis via de novo pathway; (S)-dihydroorotate from bicarbonate: step 1/3. In terms of biological role, large subunit of the glutamine-dependent carbamoyl phosphate synthetase (CPSase). CPSase catalyzes the formation of carbamoyl phosphate from the ammonia moiety of glutamine, carbonate, and phosphate donated by ATP, constituting the first step of 2 biosynthetic pathways, one leading to arginine and/or urea and the other to pyrimidine nucleotides. The large subunit (synthetase) binds the substrates ammonia (free or transferred from glutamine from the small subunit), hydrogencarbonate and ATP and carries out an ATP-coupled ligase reaction, activating hydrogencarbonate by forming carboxy phosphate which reacts with ammonia to form carbamoyl phosphate. The chain is Carbamoyl phosphate synthase large chain from Pseudomonas syringae pv. tomato (strain ATCC BAA-871 / DC3000).